Consider the following 273-residue polypeptide: Galactose-binding lectin (273 aa).

The first 23 residues, 1 to 23 (MKPFCVFLTFFLLLAASSKKVDS), serve as a signal peptide directing secretion. Positions 144 and 146 each coordinate Mn(2+). Ca(2+)-binding residues include aspartate 146, tyrosine 148, asparagine 150, and aspartate 155. Mn(2+) is bound by residues aspartate 155 and histidine 160.

This sequence belongs to the leguminous lectin family. Homotetramer.

In terms of biological role, D-galactose specific lectin. The sequence is that of Galactose-binding lectin from Arachis hypogaea (Peanut).